We begin with the raw amino-acid sequence, 202 residues long: Glycerol-3-phosphate acyltransferase (202 aa).

6 helical membrane-spanning segments follow: residues 2 to 22 (INLL…AVVV), 51 to 71 (KAAI…VLLA), 80 to 100 (VDET…LFPL), 116 to 136 (ILFA…LIIA), 137 to 157 (FFFR…PFFY), and 158 to 178 (VLMN…VLLI).

Belongs to the PlsY family. As to quaternary structure, probably interacts with PlsX.

It is found in the cell inner membrane. The enzyme catalyses an acyl phosphate + sn-glycerol 3-phosphate = a 1-acyl-sn-glycero-3-phosphate + phosphate. It functions in the pathway lipid metabolism; phospholipid metabolism. Functionally, catalyzes the transfer of an acyl group from acyl-phosphate (acyl-PO(4)) to glycerol-3-phosphate (G3P) to form lysophosphatidic acid (LPA). This enzyme utilizes acyl-phosphate as fatty acyl donor, but not acyl-CoA or acyl-ACP. In Cupriavidus metallidurans (strain ATCC 43123 / DSM 2839 / NBRC 102507 / CH34) (Ralstonia metallidurans), this protein is Glycerol-3-phosphate acyltransferase.